The following is an 847-amino-acid chain: Glucans biosynthesis glucosyltransferase H (847 aa).

Topologically, residues 1–138 are cytoplasmic; the sequence is MNKTTEYIDA…KWRTVGTIRR (138 aa). A helical membrane pass occupies residues 139-156; sequence YILLILTLAQTVVATWYM. Residues 157–193 are Periplasmic-facing; the sequence is KTILPYQGWALINPMDMVGQDIWVSFMQLLPYMLQTG. The helical transmembrane segment at 194–216 threads the bilayer; the sequence is ILILFAVLFCWVSAGFWTALMGF. At 217-511 the chain is on the cytoplasmic side; the sequence is LQLLIGRDKY…LVKGMHPVHR (295 aa). The helical transmembrane segment at 512–534 threads the bilayer; sequence AVFLTGVMSYLSAPLWFMFLALS. At 535-567 the chain is on the periplasmic side; it reads TALQVVHALTEPQYFLQPRQLFPVWPQWRPELA. The chain crosses the membrane as a helical span at residues 568–590; sequence IALFASTMVLLFLPKLLSIMLIW. At 591-602 the chain is on the cytoplasmic side; that stretch reads CKGTKEYGGFWR. The chain crosses the membrane as a helical span at residues 603 to 625; sequence VTLSLLLEVLFSVLLAPVRMLFH. Topologically, residues 626 to 679 are periplasmic; that stretch reads TVFVVSAFLGWEVVWNSPQRDDDSTPWGEAFMRHGSQLLLGLVWAVGMAWLDLR. A helical membrane pass occupies residues 680 to 702; it reads FLFWLAPIVFSLILSPFVSVISS. Residues 703–847 lie on the Cytoplasmic side of the membrane; sequence RSTVGLRTKR…ALQGRTSSAG (145 aa).

The protein belongs to the glycosyltransferase 2 family. OpgH subfamily.

Its subcellular location is the cell inner membrane. Its pathway is glycan metabolism; osmoregulated periplasmic glucan (OPG) biosynthesis. In terms of biological role, involved in the biosynthesis of osmoregulated periplasmic glucans (OPGs). The polypeptide is Glucans biosynthesis glucosyltransferase H (Salmonella typhi).